Here is a 560-residue protein sequence, read N- to C-terminus: NAD(P)H-quinone oxidoreductase chain 4-3 (560 aa).

The next 14 membrane-spanning stretches (helical) occupy residues 5–25 (FPWL…IPLL), 35–55 (WYAL…FWHH), 86–106 (ISMP…LAAW), 114–134 (LFYF…VAQD), 135–155 (LLLF…LVSI), 168–188 (FLLY…AMAL), 208–228 (ALEL…LAIF), 242–262 (SAPV…YGLI), 273–293 (HIYF…YGGL), 310–330 (VSHM…GVSG), 331–351 (AMLQ…LAGV), 374–394 (VFAL…MSGF), 417–437 (VMVF…LSML), and 488–508 (VFIA…PKIA).

The protein belongs to the complex I subunit 4 family.

The protein localises to the cellular thylakoid membrane. The enzyme catalyses a plastoquinone + NADH + (n+1) H(+)(in) = a plastoquinol + NAD(+) + n H(+)(out). The catalysed reaction is a plastoquinone + NADPH + (n+1) H(+)(in) = a plastoquinol + NADP(+) + n H(+)(out). Functionally, NDH-1 shuttles electrons from NAD(P)H, via FMN and iron-sulfur (Fe-S) centers, to quinones in the respiratory chain. The immediate electron acceptor for the enzyme in this species is believed to be plastoquinone. Couples the redox reaction to proton translocation (for every two electrons transferred, four hydrogen ions are translocated across the cytoplasmic membrane), and thus conserves the redox energy in a proton gradient. This is NAD(P)H-quinone oxidoreductase chain 4-3 (ndhD3) from Nostoc sp. (strain PCC 7120 / SAG 25.82 / UTEX 2576).